A 444-amino-acid polypeptide reads, in one-letter code: Squalene synthase ERG9 (444 aa).

The helical transmembrane segment at 421–441 threads the bilayer; it reads FNMVLSIILSVLLGFYYIYTL.

The protein belongs to the phytoene/squalene synthase family. The cofactor is Mg(2+).

Its subcellular location is the endoplasmic reticulum membrane. The protein resides in the microsome. The catalysed reaction is 2 (2E,6E)-farnesyl diphosphate + NADPH + H(+) = squalene + 2 diphosphate + NADP(+). It carries out the reaction 2 (2E,6E)-farnesyl diphosphate + NADH + H(+) = squalene + 2 diphosphate + NAD(+). The protein operates within terpene metabolism; lanosterol biosynthesis; lanosterol from farnesyl diphosphate: step 1/3. Squalene synthase; part of the third module of ergosterol biosynthesis pathway that includes the late steps of the pathway. ERG9 produces squalene from 2 farnesyl pyrophosphate moieties. The third module or late pathway involves the ergosterol synthesis itself through consecutive reactions that mainly occur in the endoplasmic reticulum (ER) membrane. Firstly, the squalene synthase ERG9 catalyzes the condensation of 2 farnesyl pyrophosphate moieties to form squalene, which is the precursor of all steroids. Squalene synthase is crucial for balancing the incorporation of farnesyl diphosphate (FPP) into sterol and nonsterol isoprene synthesis. Secondly, the squalene epoxidase ERG1 catalyzes the stereospecific oxidation of squalene to (S)-2,3-epoxysqualene, which is considered to be a rate-limiting enzyme in steroid biosynthesis. Then, the lanosterol synthase ERG7 catalyzes the cyclization of (S)-2,3 oxidosqualene to lanosterol, a reaction that forms the sterol core. In the next steps, lanosterol is transformed to zymosterol through a complex process involving various demethylation, reduction and desaturation reactions. The lanosterol 14-alpha-demethylase ERG11 (also known as CYP51) catalyzes C14-demethylation of lanosterol to produce 4,4'-dimethyl cholesta-8,14,24-triene-3-beta-ol, which is critical for ergosterol biosynthesis. The C-14 reductase ERG24 reduces the C14=C15 double bond of 4,4-dimethyl-cholesta-8,14,24-trienol to produce 4,4-dimethyl-cholesta-8,24-dienol. 4,4-dimethyl-cholesta-8,24-dienol is substrate of the C-4 demethylation complex ERG25-ERG26-ERG27 in which ERG25 catalyzes the three-step monooxygenation required for the demethylation of 4,4-dimethyl and 4alpha-methylsterols, ERG26 catalyzes the oxidative decarboxylation that results in a reduction of the 3-beta-hydroxy group at the C-3 carbon to an oxo group, and ERG27 is responsible for the reduction of the keto group on the C-3. ERG28 has a role as a scaffold to help anchor ERG25, ERG26 and ERG27 to the endoplasmic reticulum and ERG29 regulates the activity of the iron-containing C4-methylsterol oxidase ERG25. Then, the sterol 24-C-methyltransferase ERG6 catalyzes the methyl transfer from S-adenosyl-methionine to the C-24 of zymosterol to form fecosterol. The C-8 sterol isomerase ERG2 catalyzes the reaction which results in unsaturation at C-7 in the B ring of sterols and thus converts fecosterol to episterol. The sterol-C5-desaturase ERG3 then catalyzes the introduction of a C-5 double bond in the B ring to produce 5-dehydroepisterol. The C-22 sterol desaturase ERG5 further converts 5-dehydroepisterol into ergosta-5,7,22,24(28)-tetraen-3beta-ol by forming the C-22(23) double bond in the sterol side chain. Finally, ergosta-5,7,22,24(28)-tetraen-3beta-ol is substrate of the C-24(28) sterol reductase ERG4 to produce ergosterol. The protein is Squalene synthase ERG9 of Saccharomyces cerevisiae (strain ATCC 204508 / S288c) (Baker's yeast).